We begin with the raw amino-acid sequence, 91 residues long: Small ribosomal subunit protein uS19 (91 aa).

Belongs to the universal ribosomal protein uS19 family.

Functionally, protein S19 forms a complex with S13 that binds strongly to the 16S ribosomal RNA. The chain is Small ribosomal subunit protein uS19 from Synechococcus sp. (strain WH7803).